The sequence spans 750 residues: Nibrin (750 aa).

An FHA domain is found at Tyr24–Met83. 2 consecutive BRCT domains span residues Lys105–Leu181 and Gly224–Ile315. The interval Glu111 to Gln328 is mediates interaction with SP100. Positions Ile221–Asn403 are interaction with MTOR, MAPKAP1 and RICTOR. Thr337 is subject to Phosphothreonine. Ser343 carries the post-translational modification Phosphoserine; by ATM. Phosphoserine occurs at positions 347 and 433. Disordered regions lie at residues Asn429–Lys479 and Gln494–Lys550. Residue Lys436 forms a Glycyl lysine isopeptide (Lys-Gly) (interchain with G-Cter in ubiquitin) linkage. Residues Trp446–Asn457 are compositionally biased toward polar residues. Residues Pro461–Glu467 carry the Nuclear localization signal motif. Over residues Lys502–Asp514 the composition is skewed to basic and acidic residues. Phosphoserine occurs at positions 508 and 517. A Glycyl lysine isopeptide (Lys-Gly) (interchain with G-Cter in SUMO2) cross-link involves residue Lys528. Residues Ser540–Lys550 are compositionally biased toward basic and acidic residues. Glycyl lysine isopeptide (Lys-Gly) (interchain with G-Cter in SUMO2) cross-links involve residues Lys569 and Lys580. Residues Gln581–Gln599 show a composition bias toward basic and acidic residues. The segment at Gln581–Asp622 is disordered. Residues Lys683, Lys687, and Lys732 each participate in a glycyl lysine isopeptide (Lys-Gly) (interchain with G-Cter in ubiquitin) cross-link. Residues Ala737–Asn746 carry the FxF/Y motif motif.

The protein belongs to the Nibrin family. As to quaternary structure, component of the MRN complex composed of two heterodimers RAD50 and MRE11 associated with a single NBN. The MRN complexes dimerize on DNA to form joined MRN-MRN oligomers required for DNA double-strand break repair. The MRN complexes dimerize on DNA to form joined MRN-MRN oligomers required for DNA double-strand break repair. As part of the MRN complex, interacts with MCM9; the interaction recruits the complex to DNA repair sites. Component of the BASC complex, at least composed of BRCA1, MSH2, MSH6, MLH1, ATM, BLM, RAD50, MRE11 and NBN. Interacts with histone H2AX; this requires phosphorylation of H2AX on 'Ser-139' and promotes NBN recruitment to DNA damage sites. Interacts with (phosphorylated) MDC1; promoting NBN recruitment to DNA damage sites. Interacts with (phosphorylated) RAD17; promoting NBN recruitment to DNA damage sites. Interacts (via FxF/Y motif) with ATM. Interacts with HJURP. Interacts with INTS3. Interacts with KPNA2. Interacts with TERF2; interaction is disrupted upon NBN phosphorylation by CDK2. Interacts with (phosphorylated) RBBP8/CtIP; the interaction links the role of the MRN complex in DNA double-strand break sensing to resection. Interacts with SP100; recruits NBN to PML bodies. Interacts with ATF2. Interacts with MTOR, MAPKAP1 isoform 2 and RICTOR; indicative for an association with the mTORC2 complex. Interacts with MRNIP. Interacts with UFL1; promoting UFL1 recruitment to double-strand breaks following DNA damage. Interacts with CYREN (via XLF motif). Post-translationally, phosphorylated by ATM in response of ionizing radiation, and such phosphorylation is responsible intra-S phase checkpoint control and telomere maintenance. Phosphorylated at Ser-433 by CDK2 in S/G2 phases abolishes interaction with TERF2, enabling DCLRE1B/Apollo recruitment to telomeres. Phosphorylation at Ser-433 in response to dysfunctional telomeres promotes non-homologous end joining repair at telomeres, while dephosphorylation by PPP1CA promotes microhomology-mediated end-joining (MMEJ) repair. In terms of processing, ubiquitinated at Lys-436 via 'Lys-6'-linked ubiquitin chains by RNF8, promoting NBN recruitment to DNA double-strand breaks (DSBs). Ubiquitinated at Lys-687 via 'Lys-63'-linked ubiquitin chains by PELI1: ubiquitination takes place following PELI1 phosphorylation and promotes ATM activation and DNA repair. Ubiquitinated at Lys-732 via 'Lys-63'-linked ubiquitin chains by the SCF(SKP2) complex: ubiquitination takes place following SKP2 phosphorylation and promotes ATM activation and DNA repair. As to expression, present at approximately equal levels in the heart at fetal day 17, at relatively constant levels at postnatal days 10, 17 and 21 and at slightly lower levels in the adult heart. Barely detectable in the brain. Not detected in kidney, very low levels in liver and skeletal muscle and moderate levels in heart, lung and brain (at protein level).

The protein resides in the nucleus. The protein localises to the chromosome. Its subcellular location is the PML body. It localises to the telomere. Component of the MRN complex, which plays a central role in double-strand break (DSB) repair, DNA recombination, maintenance of telomere integrity and meiosis. The MRN complex is involved in the repair of DNA double-strand breaks (DSBs) via homologous recombination (HR), an error-free mechanism which primarily occurs during S and G2 phases. The complex (1) mediates the end resection of damaged DNA, which generates proper single-stranded DNA, a key initial steps in HR, and is (2) required for the recruitment of other repair factors and efficient activation of ATM and ATR upon DNA damage. The MRN complex possesses single-strand endonuclease activity and double-strand-specific 3'-5' exonuclease activity, which are provided by MRE11, to initiate end resection, which is required for single-strand invasion and recombination. Within the MRN complex, NBN acts as a protein-protein adapter, which specifically recognizes and binds phosphorylated proteins, promoting their recruitment to DNA damage sites. Recruits MRE11 and RAD50 components of the MRN complex to DSBs in response to DNA damage. Promotes the recruitment of PI3/PI4-kinase family members ATM, ATR, and probably DNA-PKcs to the DNA damage sites, activating their functions. Mediates the recruitment of phosphorylated RBBP8/CtIP to DSBs, leading to cooperation between the MRN complex and RBBP8/CtIP to initiate end resection. RBBP8/CtIP specifically promotes the endonuclease activity of the MRN complex to clear DNA ends containing protein adducts. The MRN complex is also required for the processing of R-loops. NBN also functions in telomere length maintenance via its interaction with TERF2: interaction with TERF2 during G1 phase preventing recruitment of DCLRE1B/Apollo to telomeres. NBN also promotes DNA repair choice at dysfunctional telomeres: NBN phosphorylation by CK2 promotes non-homologous end joining repair at telomeres, while unphosphorylated NBN promotes microhomology-mediated end-joining (MMEJ) repair. Enhances AKT1 phosphorylation possibly by association with the mTORC2 complex. This chain is Nibrin (Nbn), found in Rattus norvegicus (Rat).